The primary structure comprises 608 residues: 1-deoxy-D-xylulose-5-phosphate synthase (608 aa).

Residues H80 and 121–123 contribute to the thiamine diphosphate site; that span reads GHS. D152 contacts Mg(2+). Thiamine diphosphate-binding positions include 153–154, N181, Y282, and E357; that span reads GA. N181 is a Mg(2+) binding site.

The protein belongs to the transketolase family. DXPS subfamily. As to quaternary structure, homodimer. Mg(2+) serves as cofactor. Requires thiamine diphosphate as cofactor.

It catalyses the reaction D-glyceraldehyde 3-phosphate + pyruvate + H(+) = 1-deoxy-D-xylulose 5-phosphate + CO2. Its pathway is metabolic intermediate biosynthesis; 1-deoxy-D-xylulose 5-phosphate biosynthesis; 1-deoxy-D-xylulose 5-phosphate from D-glyceraldehyde 3-phosphate and pyruvate: step 1/1. Its function is as follows. Catalyzes the acyloin condensation reaction between C atoms 2 and 3 of pyruvate and glyceraldehyde 3-phosphate to yield 1-deoxy-D-xylulose-5-phosphate (DXP). This chain is 1-deoxy-D-xylulose-5-phosphate synthase, found in Buchnera aphidicola subsp. Acyrthosiphon pisum (strain 5A).